A 649-amino-acid polypeptide reads, in one-letter code: MWPQPHLPTHPHLPTHPHLPTHPMMSKETRQSKLAEAKEQLTDHHPQTNPSVGTAASDTKKKKINNGTNPETTTSGGCHSPEDEQKASHQHQEALRRELEAQVHTIRILTCQKTELQMALYYSQHAVKQLEGEARDLISRLHDSWKFAGELEQALSAVATQKKKADRYIEELTKERDALSLELYRNTITDEELKEKNAKLQEKLQLVESEKSEIQLNVKELKRKLERAKLLLPQQQLQAEADHLGKELQSVSAKLQAQVEENELWNRLNQQQEEKMWRQEEKIQEWEEKIQEQEEKIREQEEKIREQEEKMRRQEEMMWEKEEKMRRQEEMMWEKEEKMRRLEEMMWEKEEKIRELEEKMHEQEKIREQEEKRQEEEKIREQEKRQEQEAKMWRQEEKIREQEEKIREQEKKMWRQEEKIHEQEKIREEEKRQEQEEMWRQEEKIREQEEIWRQKEKMHEQEKIRKQEEKVWRQEEKMHDQEEKIREQEEKMWRQEEKIREQEEKIREQEEKIREQEEKIREQEEMMQEQEEKMGEQEEKMQEQEKMRRQEEKIREQEEKIREQKEKIREQEEKIWEQEEKIREQEEMMQEQEEKMWEQEEKMCEQEEKMQEQEEKMRRQEEKMWEQEVRLRQQEEKMQEHQEHLEAAI.

Disordered regions lie at residues 1–94 (MWPQ…HQEA), 300–330 (QEEK…RQEE), 358–440 (EKMH…EMWR), 455–572 (KEKM…REQE), and 584–620 (EQEE…MRRQ). Residues 10–23 (HPHLPTHPHLPTHP) are compositionally biased toward low complexity. Over residues 25-46 (MSKETRQSKLAEAKEQLTDHHP) the composition is skewed to basic and acidic residues. 2 stretches are compositionally biased toward polar residues: residues 47-57 (QTNPSVGTAAS) and 65-77 (NNGT…TSGG). Positions 80-94 (SPEDEQKASHQHQEA) are enriched in basic and acidic residues. A coiled-coil region spans residues 151–644 (LEQALSAVAT…EEKMQEHQEH (494 aa)).

Belongs to the GOLGA6 family.

The polypeptide is Golgin subfamily A member 6-like protein 26 (GOLGA6L26) (Homo sapiens (Human)).